Here is a 47-residue protein sequence, read N- to C-terminus: PhoP/PhoQ regulator MgrB (47 aa).

Residues tryptophan 6–methionine 26 form a helical membrane-spanning segment.

The protein belongs to the MgrB family. May form homooligomers. Probably interacts with the periplasmic domain of PhoQ.

The protein localises to the cell inner membrane. Functionally, phoP-regulated transcription is redox-sensitive, being activated when the periplasm becomes more reducing. MgrB acts between DsbA/DsbB and PhoP/PhoQ in this pathway. Represses PhoP/PhoQ signaling, possibly by binding to the periplasmic domain of PhoQ, altering its activity and that of downstream effector PhoP. The polypeptide is PhoP/PhoQ regulator MgrB (Escherichia coli O127:H6 (strain E2348/69 / EPEC)).